Here is a 259-residue protein sequence, read N- to C-terminus: Triosephosphate isomerase (259 aa).

Position 10–12 (Asn10–Lys12) interacts with substrate. His102 acts as the Electrophile in catalysis. Glu174 serves as the catalytic Proton acceptor. Substrate-binding positions include Gly180, Ser220, and Gly241–Gly242.

This sequence belongs to the triosephosphate isomerase family. Homodimer.

Its subcellular location is the cytoplasm. It carries out the reaction D-glyceraldehyde 3-phosphate = dihydroxyacetone phosphate. The protein operates within carbohydrate biosynthesis; gluconeogenesis. It functions in the pathway carbohydrate degradation; glycolysis; D-glyceraldehyde 3-phosphate from glycerone phosphate: step 1/1. In terms of biological role, involved in the gluconeogenesis. Catalyzes stereospecifically the conversion of dihydroxyacetone phosphate (DHAP) to D-glyceraldehyde-3-phosphate (G3P). This chain is Triosephosphate isomerase, found in Cutibacterium acnes (strain DSM 16379 / KPA171202) (Propionibacterium acnes).